The sequence spans 1029 residues: Pro-apoptotic serine protease NMA111 (1029 aa).

The disordered stretch occupies residues 1–49 (MNGPTSQRAKRKQGSASSLDDRPPKHQRALNGAKQQSTGDNTPEEDMYD). The serine protease stretch occupies residues 84–274 (VVSIRFCQTC…LPLDRPLRAL (191 aa)). Residues H122, D153, and S235 each act as charge relay system in the active site. 2 PDZ domains span residues 307–379 (PEWE…QRGG) and 845–958 (EFLG…VTFD). The disordered stretch occupies residues 997-1029 (KAMEGEPSEGVPAVEEEAGGAVDDDVPMAAVEK). The span at 1010–1022 (VEEEAGGAVDDDV) shows a compositional bias: acidic residues.

The protein belongs to the peptidase S1C family.

It is found in the nucleus. Functionally, nuclear serine protease which mediates apoptosis. This chain is Pro-apoptotic serine protease NMA111 (NMA111), found in Pyricularia oryzae (strain 70-15 / ATCC MYA-4617 / FGSC 8958) (Rice blast fungus).